A 331-amino-acid polypeptide reads, in one-letter code: NADH-quinone oxidoreductase subunit H (331 aa).

8 consecutive transmembrane segments (helical) span residues 7–27, 81–101, 114–134, 154–174, 187–207, 238–258, 271–291, and 310–330; these read ALVT…AVVI, MIFT…FAIV, IGIL…LFAG, ISYE…VGSF, VWFI…GVAV, FFVG…TLFF, WLSF…FILI, and VCLP…LAAA.

It belongs to the complex I subunit 1 family. In terms of assembly, NDH-1 is composed of 13 different subunits. Subunits NuoA, H, J, K, L, M, N constitute the membrane sector of the complex.

The protein resides in the cell inner membrane. The catalysed reaction is a quinone + NADH + 5 H(+)(in) = a quinol + NAD(+) + 4 H(+)(out). In terms of biological role, NDH-1 shuttles electrons from NADH, via FMN and iron-sulfur (Fe-S) centers, to quinones in the respiratory chain. The immediate electron acceptor for the enzyme in this species is believed to be ubiquinone. Couples the redox reaction to proton translocation (for every two electrons transferred, four hydrogen ions are translocated across the cytoplasmic membrane), and thus conserves the redox energy in a proton gradient. This subunit may bind ubiquinone. This is NADH-quinone oxidoreductase subunit H from Pseudomonas aeruginosa (strain ATCC 15692 / DSM 22644 / CIP 104116 / JCM 14847 / LMG 12228 / 1C / PRS 101 / PAO1).